A 250-amino-acid chain; its full sequence is Ubiquinone/menaquinone biosynthesis C-methyltransferase UbiE (250 aa).

S-adenosyl-L-methionine-binding positions include Thr73, Asp94, 122-123 (NA), and Ser139.

The protein belongs to the class I-like SAM-binding methyltransferase superfamily. MenG/UbiE family.

The enzyme catalyses a 2-demethylmenaquinol + S-adenosyl-L-methionine = a menaquinol + S-adenosyl-L-homocysteine + H(+). It carries out the reaction a 2-methoxy-6-(all-trans-polyprenyl)benzene-1,4-diol + S-adenosyl-L-methionine = a 5-methoxy-2-methyl-3-(all-trans-polyprenyl)benzene-1,4-diol + S-adenosyl-L-homocysteine + H(+). It functions in the pathway quinol/quinone metabolism; menaquinone biosynthesis; menaquinol from 1,4-dihydroxy-2-naphthoate: step 2/2. The protein operates within cofactor biosynthesis; ubiquinone biosynthesis. In terms of biological role, methyltransferase required for the conversion of demethylmenaquinol (DMKH2) to menaquinol (MKH2) and the conversion of 2-polyprenyl-6-methoxy-1,4-benzoquinol (DDMQH2) to 2-polyprenyl-3-methyl-6-methoxy-1,4-benzoquinol (DMQH2). In Francisella tularensis subsp. mediasiatica (strain FSC147), this protein is Ubiquinone/menaquinone biosynthesis C-methyltransferase UbiE.